The sequence spans 235 residues: Orotidine 5'-phosphate decarboxylase (235 aa).

Substrate contacts are provided by residues Asp17, Lys39, 66–75 (DLKLHDIGNT), Thr121, Arg182, Gln191, Gly211, and Arg212. Catalysis depends on Lys68, which acts as the Proton donor.

The protein belongs to the OMP decarboxylase family. Type 1 subfamily. Homodimer.

The enzyme catalyses orotidine 5'-phosphate + H(+) = UMP + CO2. It functions in the pathway pyrimidine metabolism; UMP biosynthesis via de novo pathway; UMP from orotate: step 2/2. Catalyzes the decarboxylation of orotidine 5'-monophosphate (OMP) to uridine 5'-monophosphate (UMP). This is Orotidine 5'-phosphate decarboxylase from Afipia carboxidovorans (strain ATCC 49405 / DSM 1227 / KCTC 32145 / OM5) (Oligotropha carboxidovorans).